We begin with the raw amino-acid sequence, 206 residues long: MSGPGTAAVALLPAVLLALLAPWAGRGGAAAPTAPNGTLEAELERRWESLVALSLARLPVAAQPKEAAVQSGAGDYLLGIKRLRRLYCNVGIGFHLQALPDGRIGGAHADTRDSLLELSPVERGVVSIFGVASRFFVAMSSKGKLYGSPFFTDECTFKEILLPNNYNAYESYKYPGMFIALSKNGKTKKGNRVSPTMKVTHFLPRL.

The first 30 residues, 1–30 (MSGPGTAAVALLPAVLLALLAPWAGRGGAA), serve as a signal peptide directing secretion.

Belongs to the heparin-binding growth factors family. In terms of assembly, interacts with FGFR1, FGFR2, FGFR3 and FGFR4. Affinity between fibroblast growth factors (FGFs) and their receptors is increased by heparan sulfate glycosaminoglycans that function as coreceptors.

The protein resides in the secreted. In terms of biological role, plays an important role in the regulation of embryonic development, cell proliferation, and cell differentiation. Required for normal limb and cardiac valve development during embryogenesis. May play a role in embryonic molar tooth bud development via inducing the expression of MSX1, MSX2 and MSX1-mediated expression of SDC1 in dental mesenchyme cells. This Homo sapiens (Human) protein is Fibroblast growth factor 4.